We begin with the raw amino-acid sequence, 137 residues long: Large ribosomal subunit protein mL41 (137 aa).

The transit peptide at Met1–Arg13 directs the protein to the mitochondrion.

This sequence belongs to the mitochondrion-specific ribosomal protein mL41 family. Component of the mitochondrial large ribosomal subunit (mt-LSU). Mature mammalian 55S mitochondrial ribosomes consist of a small (28S) and a large (39S) subunit. The 28S small subunit contains a 12S ribosomal RNA (12S mt-rRNA) and 30 different proteins. The 39S large subunit contains a 16S rRNA (16S mt-rRNA), a copy of mitochondrial valine transfer RNA (mt-tRNA(Val)), which plays an integral structural role, and 52 different proteins. Interacts with BCL2. As to expression, present in kidney, liver, thymus and testis, and at lower level in brain and spleen (at protein level).

It localises to the mitochondrion. Functionally, component of the mitochondrial ribosome large subunit. Also involved in apoptosis and cell cycle. Enhances p53/TP53 stability, thereby contributing to p53/TP53-induced apoptosis in response to growth-inhibitory condition. Enhances p53/TP53 translocation to the mitochondria. Has the ability to arrest the cell cycle at the G1 phase, possibly by stabilizing the CDKN1A and CDKN1B (p27Kip1) proteins. This is Large ribosomal subunit protein mL41 (MRPL41) from Homo sapiens (Human).